A 156-amino-acid polypeptide reads, in one-letter code: Small ribosomal subunit protein uS7 (156 aa).

It belongs to the universal ribosomal protein uS7 family. As to quaternary structure, part of the 30S ribosomal subunit. Contacts proteins S9 and S11.

One of the primary rRNA binding proteins, it binds directly to 16S rRNA where it nucleates assembly of the head domain of the 30S subunit. Is located at the subunit interface close to the decoding center, probably blocks exit of the E-site tRNA. This is Small ribosomal subunit protein uS7 from Salmonella agona (strain SL483).